A 292-amino-acid chain; its full sequence is Homoserine kinase (292 aa).

81–91 (RPRSGLGSSGA) is an ATP binding site.

It belongs to the GHMP kinase family. Homoserine kinase subfamily.

Its subcellular location is the cytoplasm. It catalyses the reaction L-homoserine + ATP = O-phospho-L-homoserine + ADP + H(+). It participates in amino-acid biosynthesis; L-threonine biosynthesis; L-threonine from L-aspartate: step 4/5. Its function is as follows. Catalyzes the ATP-dependent phosphorylation of L-homoserine to L-homoserine phosphate. The sequence is that of Homoserine kinase from Thermococcus gammatolerans (strain DSM 15229 / JCM 11827 / EJ3).